The sequence spans 365 residues: Peptide chain release factor 2 (365 aa).

Gln-251 is subject to N5-methylglutamine.

It belongs to the prokaryotic/mitochondrial release factor family. In terms of processing, methylated by PrmC. Methylation increases the termination efficiency of RF2.

It is found in the cytoplasm. In terms of biological role, peptide chain release factor 2 directs the termination of translation in response to the peptide chain termination codons UGA and UAA. In Aliarcobacter butzleri (strain RM4018) (Arcobacter butzleri), this protein is Peptide chain release factor 2.